The following is a 152-amino-acid chain: Transcriptional regulator MraZ (152 aa).

SpoVT-AbrB domains lie at 5–52 (ASAI…PLQE) and 81–124 (AHEC…DEAA).

This sequence belongs to the MraZ family. In terms of assembly, forms oligomers.

Its subcellular location is the cytoplasm. The protein resides in the nucleoid. This Shewanella denitrificans (strain OS217 / ATCC BAA-1090 / DSM 15013) protein is Transcriptional regulator MraZ.